The chain runs to 532 residues: Protein tweety homolog 2 (532 aa).

At 1–44 the chain is on the extracellular side; it reads MPAARVEYIAPWWVVWLHSVPHLGLRLQRVDSTFSPGDETYQES. The chain crosses the membrane as a helical span at residues 45 to 65; that stretch reads LLFLGVLAAIGLGLNLIFLTV. At 66 to 87 the chain is on the cytoplasmic side; that stretch reads YLVCTCCCRRDHTVQTKQQESC. A helical transmembrane segment spans residues 88 to 108; it reads CVTWTAVVAGLLCCAAVGVGF. The Extracellular portion of the chain corresponds to 109-213; that stretch reads YGNSETNDGM…QTAYVEYYRW (105 aa). Positions 113 and 116 each coordinate Ca(2+). The N-linked (GlcNAc...) asparagine glycan is linked to Asn-129. An RGD motif is present at residues 164 to 166; it reads RGD. A Phosphothreonine modification is found at Thr-199. Residues 214 to 234 traverse the membrane as a helical segment; sequence LSYLLLFILDLVICLVTCLGL. Topologically, residues 235-240 are cytoplasmic; it reads ARRSKC. The helical transmembrane segment at 241–261 threads the bilayer; it reads LLASMLCCGILTLILSWASLA. The Extracellular segment spans residues 262-385; that stretch reads ADAAAAVGTS…DALTGICYDG (124 aa). Intrachain disulfides connect Cys-274/Cys-382 and Cys-300/Cys-367. Residues Asn-283 and Asn-352 are each glycosylated (N-linked (GlcNAc...) asparagine). A helical transmembrane segment spans residues 386-406; that stretch reads IEGLLFLGLFSLLAALAFSTL. Residues 407–532 are Cytoplasmic-facing; it reads TCAGPRAWKY…EHLRHYEFPS (126 aa). Ser-504 is subject to Phosphoserine. Positions 506 to 509 match the PY-motif; mediates interaction with NEDD4L motif; that stretch reads PPTY.

It belongs to the tweety family. In terms of assembly, forms cis-homodimers in the presence of Ca(+2) and forms monomers and trans-dimers in the absence of Ca(2+). Interacts with NEDD4L. Post-translationally, ubiquitinated by NEDD4L, leading to its proteasomal degradation.

The protein resides in the cell membrane. The catalysed reaction is chloride(in) = chloride(out). It catalyses the reaction L-glutamate(out) = L-glutamate(in). With respect to regulation, inhibited by (4-[(2-butyl-6,7-dichloro-2- cyclopentyl-2,3-dihydro-1-oxo-1H-inden-5-yl)oxy]butanoic acid). Its function is as follows. Calcium-independent, swelling-dependent volume-regulated anion channel (VRAC-swell) which plays a pivotal role in the process of regulatory volume decrease (RVD) in the brain through the efflux of anions like chloride and organic osmolytes like glutamate. Probable large-conductance Ca(2+)-activated chloride channel. This chain is Protein tweety homolog 2 (Ttyh2), found in Mus musculus (Mouse).